The sequence spans 376 residues: Succinyl-diaminopimelate desuccinylase (376 aa).

Residue H66 coordinates Zn(2+). The active site involves D68. A Zn(2+)-binding site is contributed by D99. The Proton acceptor role is filled by E133. Residues E134, E162, and H349 each coordinate Zn(2+).

It belongs to the peptidase M20A family. DapE subfamily. Homodimer. Zn(2+) serves as cofactor. Requires Co(2+) as cofactor.

The enzyme catalyses N-succinyl-(2S,6S)-2,6-diaminopimelate + H2O = (2S,6S)-2,6-diaminopimelate + succinate. It functions in the pathway amino-acid biosynthesis; L-lysine biosynthesis via DAP pathway; LL-2,6-diaminopimelate from (S)-tetrahydrodipicolinate (succinylase route): step 3/3. Catalyzes the hydrolysis of N-succinyl-L,L-diaminopimelic acid (SDAP), forming succinate and LL-2,6-diaminopimelate (DAP), an intermediate involved in the bacterial biosynthesis of lysine and meso-diaminopimelic acid, an essential component of bacterial cell walls. In Vesicomyosocius okutanii subsp. Calyptogena okutanii (strain HA), this protein is Succinyl-diaminopimelate desuccinylase.